The chain runs to 156 residues: Small ribosomal subunit protein uS7 (156 aa).

It belongs to the universal ribosomal protein uS7 family. Part of the 30S ribosomal subunit. Contacts proteins S9 and S11.

One of the primary rRNA binding proteins, it binds directly to 16S rRNA where it nucleates assembly of the head domain of the 30S subunit. Is located at the subunit interface close to the decoding center, probably blocks exit of the E-site tRNA. The polypeptide is Small ribosomal subunit protein uS7 (Staphylococcus carnosus (strain TM300)).